The primary structure comprises 748 residues: Catalase-peroxidase (748 aa).

Residues 1 to 14 (MTDTSDARPPHSDA) are compositionally biased toward basic and acidic residues. A disordered region spans residues 1–40 (MTDTSDARPPHSDAKTASNSESENPAIDSPEPKSHAPLTN). The tryptophyl-tyrosyl-methioninium (Trp-Tyr) (with M-265) cross-link spans 112-239 (WHAAGTYRIF…FGATTMGLIY (128 aa)). Catalysis depends on His-113, which acts as the Proton acceptor. Positions 239-265 (YVNPEGPEGKPDPLAAAHDIRETFGRM) form a cross-link, tryptophyl-tyrosyl-methioninium (Tyr-Met) (with W-112). His-280 is a binding site for heme b.

This sequence belongs to the peroxidase family. Peroxidase/catalase subfamily. Homodimer or homotetramer. It depends on heme b as a cofactor. Formation of the three residue Trp-Tyr-Met cross-link is important for the catalase, but not the peroxidase activity of the enzyme.

The enzyme catalyses H2O2 + AH2 = A + 2 H2O. It catalyses the reaction 2 H2O2 = O2 + 2 H2O. Bifunctional enzyme with both catalase and broad-spectrum peroxidase activity. The protein is Catalase-peroxidase of Mycolicibacterium gilvum (strain PYR-GCK) (Mycobacterium gilvum (strain PYR-GCK)).